A 193-amino-acid chain; its full sequence is UPF0301 protein SCO2948 (193 aa).

Belongs to the UPF0301 (AlgH) family.

The sequence is that of UPF0301 protein SCO2948 from Streptomyces coelicolor (strain ATCC BAA-471 / A3(2) / M145).